The chain runs to 471 residues: Glutamate--tRNA ligase (471 aa).

The 'HIGH' region signature appears at 9–19 (PSPTGYLHVGG). Cys-98, Cys-100, Cys-125, and His-127 together coordinate Zn(2+). Positions 237-241 (KLSKR) match the 'KMSKS' region motif. Lys-240 contacts ATP.

The protein belongs to the class-I aminoacyl-tRNA synthetase family. Glutamate--tRNA ligase type 1 subfamily. Monomer. The cofactor is Zn(2+).

The protein localises to the cytoplasm. The enzyme catalyses tRNA(Glu) + L-glutamate + ATP = L-glutamyl-tRNA(Glu) + AMP + diphosphate. Functionally, catalyzes the attachment of glutamate to tRNA(Glu) in a two-step reaction: glutamate is first activated by ATP to form Glu-AMP and then transferred to the acceptor end of tRNA(Glu). The protein is Glutamate--tRNA ligase of Salmonella paratyphi A (strain ATCC 9150 / SARB42).